Reading from the N-terminus, the 459-residue chain is NADP-specific glutamate dehydrogenase (459 aa).

The active site involves K114.

This sequence belongs to the Glu/Leu/Phe/Val dehydrogenases family. Homohexamer.

The catalysed reaction is L-glutamate + NADP(+) + H2O = 2-oxoglutarate + NH4(+) + NADPH + H(+). This Emericella nidulans (strain FGSC A4 / ATCC 38163 / CBS 112.46 / NRRL 194 / M139) (Aspergillus nidulans) protein is NADP-specific glutamate dehydrogenase (gdhA).